The following is a 209-amino-acid chain: D-aminoacyl-tRNA deacylase 1 (209 aa).

Residues 139–140 carry the Gly-cisPro motif, important for rejection of L-amino acids motif; that stretch reads GP. Positions 142–209 are disordered; sequence TIELESPAPG…EGDVSSEREP (68 aa). 2 stretches are compositionally biased toward basic and acidic residues: residues 159 to 170 and 181 to 194; these read QLSKLEKQQQRK and SSKE…EDRS. Serine 197, serine 204, and serine 205 each carry phosphoserine.

Belongs to the DTD family. In terms of assembly, homodimer. Interacts with CDC45 and TOPBP1. Post-translationally, preferentially phosphorylated in cells arrested early in S phase. Phosphorylation in the C-terminus weakens the interaction with CDC45.

It localises to the nucleus. The protein resides in the cytoplasm. It carries out the reaction glycyl-tRNA(Ala) + H2O = tRNA(Ala) + glycine + H(+). The catalysed reaction is a D-aminoacyl-tRNA + H2O = a tRNA + a D-alpha-amino acid + H(+). Its function is as follows. An aminoacyl-tRNA editing enzyme that deacylates mischarged D-aminoacyl-tRNAs. Also deacylates mischarged glycyl-tRNA(Ala), protecting cells against glycine mischarging by AlaRS. Acts via tRNA-based rather than protein-based catalysis; rejects L-amino acids rather than detecting D-amino acids in the active site. By recycling D-aminoacyl-tRNA to D-amino acids and free tRNA molecules, this enzyme counteracts the toxicity associated with the formation of D-aminoacyl-tRNA entities in vivo and helps enforce protein L-homochirality. ATPase involved in DNA replication, may facilitate loading of CDC45 onto pre-replication complexes. This chain is D-aminoacyl-tRNA deacylase 1 (Dtd1), found in Mus musculus (Mouse).